The primary structure comprises 210 residues: Natriuretic peptide BM026 (210 aa).

The first 26 residues, 1-26 (MVGPSRLAGGGLLLLLLALLPVALDG), serve as a signal peptide directing secretion. Residues 83-99 (CFGHKIDRISHSSGMGC) form a natriuretic peptide domain 1 region. A disulfide bridge links Cys83 with Cys99. Positions 122–134 (ESKKSRAARDRMV) are enriched in basic and acidic residues. Positions 122 to 210 (ESKKSRAARD…QFNSKSSQVA (89 aa)) are disordered. A compositionally biased stretch (gly residues) spans 140–150 (AGGGGGGGGGD). Residues 156-176 (ELAKKDQHNNCFGRRIDRISH) are compositionally biased toward basic and acidic residues. Positions 166–182 (CFGRRIDRISHSTDLGC) are natriuretic peptide domain 2. Cys166 and Cys182 are disulfide-bonded. Polar residues predominate over residues 201–210 (QFNSKSSQVA).

This sequence belongs to the natriuretic peptide family. In terms of tissue distribution, expressed by the venom gland.

The protein localises to the secreted. Natriuretic peptide that dose-dependently induces the rapid relaxation of rat aortic strips phenylephrine-precontracted. Acts by stimulating cGMP production in a dose-dependent manner (by probably activating NPR1 and/or NPR2). May also show potent hypotensive effects. The chain is Natriuretic peptide BM026 from Bungarus multicinctus (Many-banded krait).